The following is a 110-amino-acid chain: Large ribosomal subunit protein uL22 (110 aa).

This sequence belongs to the universal ribosomal protein uL22 family. As to quaternary structure, part of the 50S ribosomal subunit.

In terms of biological role, this protein binds specifically to 23S rRNA; its binding is stimulated by other ribosomal proteins, e.g. L4, L17, and L20. It is important during the early stages of 50S assembly. It makes multiple contacts with different domains of the 23S rRNA in the assembled 50S subunit and ribosome. Its function is as follows. The globular domain of the protein is located near the polypeptide exit tunnel on the outside of the subunit, while an extended beta-hairpin is found that lines the wall of the exit tunnel in the center of the 70S ribosome. This is Large ribosomal subunit protein uL22 from Dichelobacter nodosus (strain VCS1703A).